Here is a 2776-residue protein sequence, read N- to C-terminus: Microtubule-associated protein 1A (2776 aa).

Phosphoserine is present on residues serine 114, serine 117, serine 118, serine 121, and serine 155. At tyrosine 177 the chain carries Phosphotyrosine. Positions 310–331 are disordered; sequence PSKIKHRADSKESLKAAPKTAM. 2 positions are modified to phosphoserine: serine 319 and serine 322. The stretch at 336–338 is repeat 1; the sequence is KRE. Positions 336-541 are 11 X 3 AA approximate repeats of K-K-[DE]; it reads KREEVLEEGA…TQDFEELKRE (206 aa). Positions 345–390 are enriched in basic and acidic residues; the sequence is AKEARSELAKELAKSEKKAKEPSEKPPEKPSKPERVRTESSEALKA. 8 disordered regions span residues 345–678, 738–809, 846–1076, 1094–1210, 1223–1651, 1685–1729, 1744–1848, and 1866–2648; these read AKEA…KAES, TIPG…TELT, EDQS…AGGQ, ETGE…ESLG, EKGP…SPEQ, DGQG…FKDF, LAES…APFS, and AELE…NGLK. A Phosphoserine modification is found at serine 384. Positions 391 to 406 are enriched in basic residues; it reads EKRKLIKDKVGKKHLK. Basic and acidic residues-rich tracts occupy residues 407–464 and 484–500; these read EKIS…KPDL and LKVDKGRAARGEKELSS. 9 tandem repeats follow at residues 415 to 417, 420 to 422, 424 to 426, 427 to 429, 431 to 433, 436 to 438, 440 to 442, 444 to 446, and 449 to 451. Threonine 504 is subject to Phosphothreonine. 2 positions are modified to phosphoserine: serine 526 and serine 527. The span at 536 to 556 shows a compositional bias: basic and acidic residues; the sequence is EELKREERGLLAEPRDTELGE. Residues 539–541 form repeat 11; that stretch reads KRE. The span at 567-579 shows a compositional bias: polar residues; the sequence is GRPSTAIQVTQPP. Residues 587 to 631 show a composition bias toward basic and acidic residues; the sequence is QVEREKEVVPDFPEDKGSKNRAPDSGAEVEREKETWEERKPREAE. Phosphoserine is present on residues serine 604 and serine 611. Residue threonine 633 is modified to Phosphothreonine. The segment covering 640-667 has biased composition (basic and acidic residues); that stretch reads AREESEPEVKEDVIEKAELEEMEEVHPS. Phosphoserine is present on residues serine 644, serine 667, serine 678, and serine 786. Composition is skewed to polar residues over residues 785 to 800, 846 to 859, and 870 to 882; these read ASQSAESAVPASSSKT, EDQSVASLTAPQTE, and TVTSIPSSRTEAT. Residues serine 873, serine 876, serine 877, and serine 890 each carry the phosphoserine modification. Threonine 893 bears the Phosphothreonine mark. Phosphoserine is present on residues serine 895, serine 899, and serine 908. Over residues 944–954 the composition is skewed to polar residues; that stretch reads VTTSEKLSSQY. Residues serine 981, serine 991, serine 999, serine 1008, serine 1014, serine 1023, and serine 1062 each carry the phosphoserine modification. Position 1068 is a phosphothreonine (threonine 1068). Positions 1096–1105 are enriched in low complexity; sequence GEAGAASGAG. The span at 1112–1124 shows a compositional bias: basic and acidic residues; sequence RTQEPAEPQKDEL. Serine 1131, serine 1133, serine 1147, serine 1159, serine 1177, serine 1187, serine 1190, serine 1196, serine 1205, and serine 1208 each carry phosphoserine. The span at 1179-1189 shows a compositional bias: polar residues; it reads EDTQSLSFSEE. The segment covering 1197 to 1210 has biased composition (polar residues); the sequence is LDISSKQLSPESLG. Residues 1223–1234 are compositionally biased toward basic and acidic residues; that stretch reads EKGPLVKAEDNS. Phosphoserine is present on residues serine 1251, serine 1289, serine 1310, serine 1313, and serine 1316. A compositionally biased stretch (low complexity) spans 1302-1317; that stretch reads TSDSSLTKSPESLSSP. Basic and acidic residues-rich tracts occupy residues 1332-1350, 1370-1384, 1391-1435, 1449-1488, 1499-1541, and 1549-1599; these read GSEDRATEQKEKELERKSE, SVMHQKDEALDEENK, KTSE…KALE, PRARAQEHRDLEQKDEHLELRDKTPEEKDKVLVLEDRAPE, RAPE…DQDN, and GTLK…EKTR. Phosphoserine is present on residues serine 1516, serine 1580, and serine 1606. A compositionally biased stretch (basic and acidic residues) spans 1609 to 1625; it reads EEGKAREQEEKYWKEQD. Phosphoserine is present on residues serine 1634 and serine 1648. The span at 1709-1718 shows a compositional bias: polar residues; the sequence is QEITPLQHTP. Phosphoserine occurs at positions 1720, 1747, 1762, 1768, and 1772. Threonine 1777 carries the post-translational modification Phosphothreonine. 2 positions are modified to phosphoserine: serine 1783 and serine 1789. The segment covering 1794 to 1808 has biased composition (polar residues); sequence TKSTPPTRNEPTTPS. Over residues 1823 to 1844 the composition is skewed to pro residues; sequence LPPAPLSPAPAPPTPAPDPHAP. Residues 1878–1890 show a composition bias toward basic and acidic residues; that stretch reads KDYRKAEGEREGE. At serine 1902 the chain carries Phosphoserine. 2 stretches are compositionally biased toward basic and acidic residues: residues 1907 to 1935 and 1972 to 1988; these read EVTESHTTRDAEQTEPEQREPTPYPDERS and STKEEAAGRNKSAEKEL. Threonine 1928 carries the post-translational modification Phosphothreonine. Residues 1990–2006 show a composition bias toward polar residues; that stretch reads SAVSPPNLHSDTPTFSY. Serine 1993 is subject to Phosphoserine. The segment covering 2013–2039 has biased composition (pro residues); it reads TIPPRQEPEPGPNVEPSFTPPAVPPRA. The residue at position 2031 (threonine 2031) is a Phosphothreonine. A compositionally biased stretch (polar residues) spans 2042 to 2058; the sequence is SLSQDPSPPLNGSTTSC. A phosphoserine mark is found at serine 2048 and serine 2082. Basic and acidic residues predominate over residues 2060 to 2096; sequence PDRRTPSPKEAGRSHWDDGTNDSDLEKGAREQPEKET. Positions 2149–2158 are enriched in pro residues; the sequence is PAPPQLPSPA. Phosphoserine occurs at positions 2209, 2226, 2230, 2233, and 2234. Residues 2231–2242 show a composition bias toward polar residues; the sequence is EGSSSEATTPVI. The span at 2279–2292 shows a compositional bias: low complexity; that stretch reads PLSPAPLASRDLAP. Positions 2355 to 2367 are enriched in basic and acidic residues; it reads AEKEEAEALHAWE. Serine 2425 carries the phosphoserine modification. The span at 2478 to 2490 shows a compositional bias: low complexity; the sequence is SASDSGSSQSDSD. The span at 2535–2551 shows a compositional bias: pro residues; that stretch reads DPPPAPLPDPRPPPPRP. Basic and acidic residues predominate over residues 2566-2576; the sequence is GRVERLREKVQ. A phosphoserine mark is found at serine 2623 and serine 2637.

The protein belongs to the MAP1 family. 3 different light chains, LC1 (a cleavage product of MAP1B), LC2 (a cleavage product of MAP1A) and LC3 (produced by one of the MAP1LC3 genes), can associate with the MAP1A or MAP1B heavy chains. Interacts with guanylate kinase-like domain of DLG1, DLG2 and DLG4. Binds to CSNK1D. Interacts with TIAM2. As to quaternary structure, interacts with ELAVL4. In terms of processing, phosphorylated by CSNK1D. LC2 is generated from MAP1A by proteolytic processing. It is free to associate with both MAP1A and MAP1B. As to expression, both isoforms highly expressed in brain, and to a lesser extent in embryo. Isoform 1 is also expressed at a low level in other tissues including heart and muscle.

Its subcellular location is the cytoplasm. It is found in the cytoskeleton. Its function is as follows. Structural protein involved in the filamentous cross-bridging between microtubules and other skeletal elements. This Mus musculus (Mouse) protein is Microtubule-associated protein 1A (Map1a).